The chain runs to 444 residues: tRNA-2-methylthio-N(6)-dimethylallyladenosine synthase (444 aa).

Residues 7 to 121 enclose the MTTase N-terminal domain; that stretch reads KTFHVKSFGC…LPELIARAER (115 aa). [4Fe-4S] cluster is bound by residues C16, C52, C84, C158, C162, and C165. The Radical SAM core domain occupies 144–376; that stretch reads GNQRPTAFLT…QALLNEQQQA (233 aa). The TRAM domain maps to 379–441; it reads EATVGRTTRL…PNSLGAEPLM (63 aa).

Belongs to the methylthiotransferase family. MiaB subfamily. As to quaternary structure, monomer. The cofactor is [4Fe-4S] cluster.

The protein resides in the cytoplasm. It carries out the reaction N(6)-dimethylallyladenosine(37) in tRNA + (sulfur carrier)-SH + AH2 + 2 S-adenosyl-L-methionine = 2-methylsulfanyl-N(6)-dimethylallyladenosine(37) in tRNA + (sulfur carrier)-H + 5'-deoxyadenosine + L-methionine + A + S-adenosyl-L-homocysteine + 2 H(+). Functionally, catalyzes the methylthiolation of N6-(dimethylallyl)adenosine (i(6)A), leading to the formation of 2-methylthio-N6-(dimethylallyl)adenosine (ms(2)i(6)A) at position 37 in tRNAs that read codons beginning with uridine. The chain is tRNA-2-methylthio-N(6)-dimethylallyladenosine synthase from Sphingopyxis alaskensis (strain DSM 13593 / LMG 18877 / RB2256) (Sphingomonas alaskensis).